Reading from the N-terminus, the 477-residue chain is Protoporphyrinogen oxidase (477 aa).

FAD contacts are provided by residues 9-14 (GGGISG), Trp42, 57-60 (GPRG), Val257, Ala449, and 454-456 (VAV).

The protein belongs to the protoporphyrinogen/coproporphyrinogen oxidase family. Protoporphyrinogen oxidase subfamily. As to quaternary structure, monomer. Homodimer. FAD serves as cofactor.

It is found in the mitochondrion inner membrane. It carries out the reaction protoporphyrinogen IX + 3 O2 = protoporphyrin IX + 3 H2O2. The protein operates within porphyrin-containing compound metabolism; protoporphyrin-IX biosynthesis; protoporphyrin-IX from protoporphyrinogen-IX: step 1/1. Functionally, catalyzes the 6-electron oxidation of protoporphyrinogen-IX to form protoporphyrin-IX. The polypeptide is Protoporphyrinogen oxidase (PPOX) (Macaca fascicularis (Crab-eating macaque)).